We begin with the raw amino-acid sequence, 1036 residues long: KAT8 regulatory NSL complex subunit 1 (1036 aa).

Lysine 104 is subject to N6-acetyllysine. Disordered stretches follow at residues 145–211 and 226–257; these read GQTA…CTLP and NSTA…SSSN. Over residues 226–244 the composition is skewed to polar residues; the sequence is NSTANKSSVNSMDQPALQG. Residues 245 to 256 show a composition bias toward low complexity; that stretch reads SSRLSPSTDSSS. Position 249 is a phosphoserine (serine 249). Lysine 262 is covalently cross-linked (Glycyl lysine isopeptide (Lys-Gly) (interchain with G-Cter in SUMO2)). Serine 268 carries the post-translational modification Phosphoserine. Residues 285–312 adopt a coiled-coil conformation; the sequence is TALLRRQADIEIRARRLQKRLQVVQAKQ. Lysine 331 is covalently cross-linked (Glycyl lysine isopeptide (Lys-Gly) (interchain with G-Cter in SUMO2)). 2 disordered regions span residues 399-423 and 739-787; these read DSDV…RADP and SPSY…RRRG. The span at 759–772 shows a compositional bias: low complexity; it reads STSSDTSTPTSSGS. The interval 781–813 is required for activation of KAT8 histone acetyltransferase activity; sequence PVRRRRGESSFDINNIVIPMSVAATTRVEKLQY. Positions 815–966 constitute a PEHE domain; sequence EILTPSWREV…GLDEQSVQPW (152 aa). The tract at residues 841 to 859 is interaction with KAT8 HAT domain; it reads EDLSDAAFAALHAKCEEME. Residues 869-931 are disordered; sequence VPPQRRGSRS…SPISPELHSA (63 aa). A compositionally biased stretch (polar residues) spans 886-896; it reads TTPQLGSANPS. Positions 906–919 are enriched in low complexity; the sequence is SSSHSLSEFSHGQS. Residues serine 922 and serine 925 each carry the phosphoserine modification. Threonine 934 is modified (phosphothreonine). Residue serine 976 is modified to Phosphoserine. Positions 989 to 1020 are disordered; sequence DTAARCTRRTSGSKTGREAEVAPTSPPVVPLK.

As to quaternary structure, component of the NSL complex at least composed of MOF/KAT8, KANSL1, KANSL2, KANSL3, MCRS1, PHF20, OGT1/OGT, WDR5 and HCFC1. Interacts (via PEHE domain) with KAT8 (via HAT domain); the interaction is direct. Component of some MLL1/MLL complex, at least composed of the core components KMT2A/MLL1, ASH2L, HCFC1, WDR5 and RBBP5, as well as the facultative components BACC1, CHD8, E2F6, HSP70, INO80C, KANSL1, LAS1L, MAX, MCRS1, MGA, KAT8/MOF, PELP1, PHF20, PRP31, RING2, RUVB1/TIP49A, RUVB2/TIP49B, SENP3, TAF1, TAF4, TAF6, TAF7, TAF9 and TEX10.

The protein localises to the nucleus. It is found in the chromosome. The protein resides in the centromere. Its subcellular location is the kinetochore. It localises to the mitochondrion. The protein localises to the cytoplasm. It is found in the cytoskeleton. The protein resides in the spindle pole. Functionally, non-catalytic component of the NSL histone acetyltransferase complex, a multiprotein complex that mediates histone H4 acetylation at 'Lys-5'- and 'Lys-8' (H4K5ac and H4K8ac) at transcription start sites and promotes transcription initiation. The NSL complex also acts as a regulator of gene expression in mitochondria. In addition to its role in transcription, KANSL1 also plays an essential role in spindle assembly during mitosis. Associates with microtubule ends and contributes to microtubule stability. The protein is KAT8 regulatory NSL complex subunit 1 (Kansl1) of Mus musculus (Mouse).